The sequence spans 355 residues: Protein-glutamate methylesterase/protein-glutamine glutaminase 3 (355 aa).

The Response regulatory domain maps to Arg8–Glu126. Asp59 carries the 4-aspartylphosphate modification. The CheB-type methylesterase domain occupies Pro152 to Gln337. Residues Ser166, His193, and Asp284 contribute to the active site.

The protein belongs to the CheB family. Phosphorylated by CheA. Phosphorylation of the N-terminal regulatory domain activates the methylesterase activity.

It is found in the cytoplasm. The enzyme catalyses [protein]-L-glutamate 5-O-methyl ester + H2O = L-glutamyl-[protein] + methanol + H(+). The catalysed reaction is L-glutaminyl-[protein] + H2O = L-glutamyl-[protein] + NH4(+). Functionally, involved in chemotaxis. Part of a chemotaxis signal transduction system that modulates chemotaxis in response to various stimuli. Catalyzes the demethylation of specific methylglutamate residues introduced into the chemoreceptors (methyl-accepting chemotaxis proteins or MCP) by CheR. Also mediates the irreversible deamidation of specific glutamine residues to glutamic acid. The sequence is that of Protein-glutamate methylesterase/protein-glutamine glutaminase 3 from Myxococcus xanthus (strain DK1622).